The following is a 341-amino-acid chain: Phosphoribosylformylglycinamidine cyclo-ligase (341 aa).

Belongs to the AIR synthase family.

The protein resides in the cytoplasm. The catalysed reaction is 2-formamido-N(1)-(5-O-phospho-beta-D-ribosyl)acetamidine + ATP = 5-amino-1-(5-phospho-beta-D-ribosyl)imidazole + ADP + phosphate + H(+). It participates in purine metabolism; IMP biosynthesis via de novo pathway; 5-amino-1-(5-phospho-D-ribosyl)imidazole from N(2)-formyl-N(1)-(5-phospho-D-ribosyl)glycinamide: step 2/2. The chain is Phosphoribosylformylglycinamidine cyclo-ligase from Caldicellulosiruptor saccharolyticus (strain ATCC 43494 / DSM 8903 / Tp8T 6331).